Consider the following 483-residue polypeptide: MEFGDGVSFAVVPTVFKREDYKRTKHDTVFSKWQVLIGSNDWEDFKNGKDGVGRYRVQNLPRKSCPGLYELGVAVIGQEQCRKLEPDIVLASYLGQAESVRSRLQRYGRSGAHLRNVNNLNDCETIESPVKAVTGGLFEDIFSKGGSILYRWAPMGSKREAEATEGMLLSTFDYAWNKGSNGERRQLDLLKKLGDREFMSKRKSGISRMLFPFLRNQVGIRIKGEKHVLKEERKLTCDVDEEKSNNFLTSILKLTRSRPQPVSDRFDEVDGSCSDIVCGVLLEDGGCCIRSPVKGRKRCIEHKGQRVCRVSPEKQTPPKSEIFTGQDHHNHKDSDVVCGVILPDMEPCNKRPVPGRKRCEDHKGMRINAFLFLLNQTDREKTVKDEKPDPESHTESIEEEALTRFCEATTKNGLPCTRSSPKGSKRCWQHKEKTSSDTSPVYFQPEAAKNVACGVKLGNGLICERSPVKGRKRCEEHKGMRIT.

Residues 64 to 112 (SCPGLYELGVAVIGQEQCRKLEPDIVLASYLGQAESVRSRLQRYGRSGA) enclose the GIY-YIG domain. 2 Cx9Cx9RCx2HK repeats span residues 278 to 303 (CGVLLEDGGCCIRSPVKGRKRCIEHK) and 338 to 363 (CGVILPDMEPCNKRPVPGRKRCEDHK). A compositionally biased stretch (basic and acidic residues) spans 380-396 (EKTVKDEKPDPESHTES). The interval 380-399 (EKTVKDEKPDPESHTESIEE) is disordered. Cx9Cx9RCx2HK repeat units follow at residues 406 to 431 (CEATTKNGLPCTRSSPKGSKRCWQHK) and 453 to 478 (CGVKLGNGLICERSPVKGRKRCEEHK).

As to expression, expressed in vascular tissues of stems, hypocotyls, leaves and flowers. Expressed in the vascular bundles of xylem in shoot parenchyma cells. Expressed in the remnant cytoplasm of differentiated fiber cells and in protoxylem element of parenchymal cells.

The protein resides in the cytoplasm. Its subcellular location is the nucleus. Its function is as follows. Transcriptional regulator involved in the regulation of cell differentiation in meristems. Probably regulates the expression of various KNAT genes involved in the maintenance of the cells in an undifferentiated, merismastic state. Plays a role in the regulation of gibberellin 20 oxidase and the gibberellin-regulated protein GASA4. Localizes in the nucleus during the cellular differentiation state and may act via a single strand cutting domain. Transcriptional regulator required for the induction of dormancy during late seed development. Interacts genetically with FUS3 and may be component of the same regulatory pathway during embryogenesis. Binds both linear and supercoiled DNA without sequence preference. The protein is Protein EFFECTOR OF TRANSCRIPTION 2 of Arabidopsis thaliana (Mouse-ear cress).